Here is a 1097-residue protein sequence, read N- to C-terminus: Nitric oxide synthase-like protein (1097 aa).

Cys-77 is a binding site for heme b. The L-arginine site is built by Gln-140, Trp-249, Tyr-250, Glu-254, and Asn-259. Residues Trp-340 and Phe-353 each coordinate (6R)-L-erythro-5,6,7,8-tetrahydrobiopterin. Tyr-368 serves as a coordination point for heme b. Residues Lys-387–Phe-410 form a calmodulin-binding region. Residues Ala-420–Phe-615 enclose the Flavodoxin-like domain. FMN contacts are provided by residues Thr-426–Lys-430 and Val-561–His-592. The FAD-binding FR-type domain maps to Lys-669–Pro-914. FAD contacts are provided by residues Tyr-704–Cys-715 and Leu-847–Ser-857. Residues Ile-922 to Arg-940 and Gly-1019 to Val-1034 each bind NADP(+).

Belongs to the NOS family. Heme b serves as cofactor. It depends on FAD as a cofactor. FMN is required as a cofactor.

The enzyme catalyses 2 L-arginine + 3 NADPH + 4 O2 + H(+) = 2 L-citrulline + 2 nitric oxide + 3 NADP(+) + 4 H2O. Its function is as follows. Produces nitric oxide (NO) which is a messenger molecule with diverse functions throughout the body. The protein is Nitric oxide synthase-like protein of Bombyx mori (Silk moth).